The primary structure comprises 650 residues: Acetyl-coenzyme A synthetase (650 aa).

CoA is bound by residues 191 to 194 (RGGR), Thr311, and Asn335. ATP-binding positions include 387–389 (GEP), 411–416 (DTWWQT), Asp500, and Arg515. Ser523 provides a ligand contact to CoA. Arg526 provides a ligand contact to ATP. Val537, His539, and Val542 together coordinate Mg(2+). A CoA-binding site is contributed by Arg584. N6-acetyllysine is present on Lys609.

This sequence belongs to the ATP-dependent AMP-binding enzyme family. It depends on Mg(2+) as a cofactor. In terms of processing, acetylated. Deacetylation by the SIR2-homolog deacetylase activates the enzyme.

The catalysed reaction is acetate + ATP + CoA = acetyl-CoA + AMP + diphosphate. Its function is as follows. Catalyzes the conversion of acetate into acetyl-CoA (AcCoA), an essential intermediate at the junction of anabolic and catabolic pathways. AcsA undergoes a two-step reaction. In the first half reaction, AcsA combines acetate with ATP to form acetyl-adenylate (AcAMP) intermediate. In the second half reaction, it can then transfer the acetyl group from AcAMP to the sulfhydryl group of CoA, forming the product AcCoA. This Shewanella oneidensis (strain ATCC 700550 / JCM 31522 / CIP 106686 / LMG 19005 / NCIMB 14063 / MR-1) protein is Acetyl-coenzyme A synthetase.